Consider the following 435-residue polypeptide: MLSSGAGSSIRKKRNFKGLQLAESPLASPVDASATTPSHKPGEGSAASNASTIGKSSAVTPGGSLALPVKNGLDTEPNSGANYHNKLTQQLANLELGVEYKLDLKNEDLKTLSELGAGNGGTVTKVLHEKSGTVMAKKVVFIDAKPSVRKQILRELQILHECNSPYIVSFYGAYLNEPHICMCMEFMQKDSLDGIYKKYGPISPEICGKIAVAVSHGLTYLYDVHRIIHRDVKPSNILVNGAGQIKICDFGVSGELINSIADTFVGTSTYMSPERIQGDQYSVKSDVWSLGVSIIELALGRFPFAENEEDDDSDADNNYTNEDLAGTLSPTKPAPMISLGQNEKQRRRKSKPAGVSLEGSSHQMSILDLLQHIVNEPPPKLPEGRFPKHMEEFVNLCLLKDPAKRPTPKDLTKHQYVIDADAAKVDLQAWADGMK.

The disordered stretch occupies residues Met-1 to Pro-61. A compositionally biased stretch (polar residues) spans Ala-46–Val-59. Residues Leu-109 to Val-417 form the Protein kinase domain. Residues Leu-115–Val-123 and Lys-138 contribute to the ATP site. Asp-231 acts as the Proton acceptor in catalysis. Residues Asn-307–Gly-359 form a disordered region.

Belongs to the protein kinase superfamily. STE Ser/Thr protein kinase family. MAP kinase kinase subfamily.

It catalyses the reaction L-seryl-[protein] + ATP = O-phospho-L-seryl-[protein] + ADP + H(+). The catalysed reaction is L-threonyl-[protein] + ATP = O-phospho-L-threonyl-[protein] + ADP + H(+). It carries out the reaction L-tyrosyl-[protein] + ATP = O-phospho-L-tyrosyl-[protein] + ADP + H(+). In terms of biological role, protein kinase that is necessary for a-locus-dependent processes, such as conjugation tube formation, filament formation, and maintenance of filamentous growth, and for a-locus-independent processes, such as tumor induction and teliospore germination. The polypeptide is Dual specificity protein kinase FUZ7 (FUZ7) (Mycosarcoma maydis (Corn smut fungus)).